The chain runs to 549 residues: Chaperonin GroEL (549 aa).

ATP is bound by residues 29–32, K50, 86–90, G418, and D499; these read TAGP and DGTTT.

It belongs to the chaperonin (HSP60) family. In terms of assembly, forms a cylinder of 14 subunits composed of two heptameric rings stacked back-to-back. Interacts with the co-chaperonin GroES.

The protein localises to the cytoplasm. It catalyses the reaction ATP + H2O + a folded polypeptide = ADP + phosphate + an unfolded polypeptide.. In terms of biological role, together with its co-chaperonin GroES, plays an essential role in assisting protein folding. The GroEL-GroES system forms a nano-cage that allows encapsulation of the non-native substrate proteins and provides a physical environment optimized to promote and accelerate protein folding. The polypeptide is Chaperonin GroEL (Wolbachia sp. subsp. Drosophila simulans (strain wRi)).